We begin with the raw amino-acid sequence, 362 residues long: MTTVPRTTDLAAIRIWLTVVAGLIALMVLVGGATRLTESGLSIVEWKPVTGTLPPLSERAWTDAFEAYKTIPQYRQMNAGMTLHEFKTIFWWEWGHRLLGRVIGMVYLLPFLWFLWRGAVSGPLGRRLWLIFGLGALQGAVGWWMVASGLTERTEVAPVRLATHLSLALLIFAAIVWTLRRLAPRAEAEVPARLRLTAWGLVGVTFVQLYLGALVAGLRAGLVYNTWPDIDGGLIPKAANLWIQSPWWINLFENDLTVQFMHRMTAYTLFLLGAWHAFDVMRAGAGRTVVRGAHRLLAAILVQAGLGIATLLMVVPISLALLHQGTAIIVLTFAVLQAERLSPRRVAAVVVPQAAVAAGQAG.

The next 5 helical transmembrane spans lie at 10 to 30, 102 to 122, 128 to 148, 159 to 179, and 198 to 218; these read LAAI…MVLV, VIGM…AVSG, LWLI…MVAS, VRLA…VWTL, and AWGL…VAGL. H262 is a heme binding site. 3 consecutive transmembrane segments (helical) span residues 266–286, 297–317, and 318–338; these read AYTL…AGAG, LAAI…VVPI, and SLAL…VLQA. H323 is a binding site for heme.

It belongs to the COX15/CtaA family. Type 2 subfamily. As to quaternary structure, interacts with CtaB. Heme b serves as cofactor.

Its subcellular location is the cell membrane. The catalysed reaction is Fe(II)-heme o + 2 A + H2O = Fe(II)-heme a + 2 AH2. It functions in the pathway porphyrin-containing compound metabolism; heme A biosynthesis; heme A from heme O: step 1/1. Its function is as follows. Catalyzes the conversion of heme O to heme A by two successive hydroxylations of the methyl group at C8. The first hydroxylation forms heme I, the second hydroxylation results in an unstable dihydroxymethyl group, which spontaneously dehydrates, resulting in the formyl group of heme A. This chain is Heme A synthase, found in Bradyrhizobium sp. (strain BTAi1 / ATCC BAA-1182).